A 275-amino-acid chain; its full sequence is Secreted RxLR effector protein 153 (275 aa).

An N-terminal signal peptide occupies residues 1 to 27 (MRNRAFLFGLFFIEYACLVLFAAPTRA). A glycan (N-linked (GlcNAc...) asparagine) is linked at Asn-45. A RxLR-dEER motif is present at residues 48 to 63 (RTLQADDSKRISAEER).

It belongs to the RxLR effector family.

The protein localises to the secreted. It is found in the host cell membrane. Secreted effector that completely suppresses the host cell death induced by cell death-inducing proteins. In Plasmopara viticola (Downy mildew of grapevine), this protein is Secreted RxLR effector protein 153.